The primary structure comprises 115 residues: NADH-ubiquinone oxidoreductase chain 3 (115 aa).

Helical transmembrane passes span 4-24 (FMAL…AFWL), 55-75 (FFLV…LLPL), and 87-107 (MMLT…YEWV).

The protein belongs to the complex I subunit 3 family. In terms of assembly, core subunit of respiratory chain NADH dehydrogenase (Complex I) which is composed of 45 different subunits. Interacts with TMEM186. Interacts with TMEM242.

It localises to the mitochondrion inner membrane. It catalyses the reaction a ubiquinone + NADH + 5 H(+)(in) = a ubiquinol + NAD(+) + 4 H(+)(out). Functionally, core subunit of the mitochondrial membrane respiratory chain NADH dehydrogenase (Complex I) which catalyzes electron transfer from NADH through the respiratory chain, using ubiquinone as an electron acceptor. Essential for the catalytic activity of complex I. This chain is NADH-ubiquinone oxidoreductase chain 3, found in Osgoodomys banderanus (Michoacan deer mouse).